The chain runs to 393 residues: 5-azacytidine-induced protein 2 (393 aa).

The segment at 1-198 (MDALVEDDIC…IELQKAKQTD (198 aa)) is homodimerization. Residues 40-198 (ALVTAYEDIK…IELQKAKQTD (159 aa)) are a coiled coil. The segment at 217–258 (SDNMQSAYWELKREMSNLHLVTQVQAELLRKLKTPAAIKKAC) is interaction with TBK1 and IKBKE. A Phosphoserine modification is found at Ser-319. 2 disordered regions span residues 321–340 (TDHE…HNSY) and 345–393 (LEDN…HYKH). Residue Ser-354 is modified to Phosphoserine. Residues 384–393 (QHNQNCHYKH) show a composition bias toward polar residues.

In terms of assembly, homodimer. Interacts with IKBKE, TBK1 and TICAM1. Interacts with TAX1BP1. Interacts with CALCOCO2. Post-translationally, ubiquitinated via 'Lys-48'-linked polyubiquitination by TRIM38, leading to its degradation.

It localises to the cytoplasm. Functionally, adapter protein which binds TBK1 and IKBKE playing a role in antiviral innate immunity. Activates serine/threonine-protein kinase TBK1 and facilitates its oligomerization. Enhances the phosphorylation of NF-kappa-B p65 subunit RELA by TBK1. Promotes TBK1-induced as well as TNF-alpha or PMA-induced activation of NF-kappa-B. Participates in IFNB promoter activation via TICAM1. This Bos taurus (Bovine) protein is 5-azacytidine-induced protein 2 (AZI2).